Reading from the N-terminus, the 258-residue chain is Hydroxyacylglutathione hydrolase (258 aa).

Zn(2+) is bound by residues His52, His54, Asp56, His57, His109, Asp126, and His164.

The protein belongs to the metallo-beta-lactamase superfamily. Glyoxalase II family. In terms of assembly, monomer. It depends on Zn(2+) as a cofactor.

The catalysed reaction is an S-(2-hydroxyacyl)glutathione + H2O = a 2-hydroxy carboxylate + glutathione + H(+). It functions in the pathway secondary metabolite metabolism; methylglyoxal degradation; (R)-lactate from methylglyoxal: step 2/2. Thiolesterase that catalyzes the hydrolysis of S-D-lactoyl-glutathione to form glutathione and D-lactic acid. This is Hydroxyacylglutathione hydrolase from Xylella fastidiosa (strain 9a5c).